The sequence spans 198 residues: Putative pseudouridine methyltransferase (198 aa).

Positions 132 and 186 each coordinate S-adenosyl-L-methionine.

It belongs to the methyltransferase superfamily. TrmY family.

It localises to the cytoplasm. This chain is Putative pseudouridine methyltransferase, found in Shewanella frigidimarina (strain NCIMB 400).